The chain runs to 303 residues: tRNA pseudouridine synthase A (303 aa).

Residue D59 is the Nucleophile of the active site. A substrate-binding site is contributed by Y128.

The protein belongs to the tRNA pseudouridine synthase TruA family. Homodimer.

It catalyses the reaction uridine(38/39/40) in tRNA = pseudouridine(38/39/40) in tRNA. Functionally, formation of pseudouridine at positions 38, 39 and 40 in the anticodon stem and loop of transfer RNAs. The sequence is that of tRNA pseudouridine synthase A from Bifidobacterium longum (strain DJO10A).